The following is a 484-amino-acid chain: Argininosuccinate lyase (484 aa).

Belongs to the lyase 1 family. Argininosuccinate lyase subfamily.

It is found in the cytoplasm. It catalyses the reaction 2-(N(omega)-L-arginino)succinate = fumarate + L-arginine. It functions in the pathway amino-acid biosynthesis; L-arginine biosynthesis; L-arginine from L-ornithine and carbamoyl phosphate: step 3/3. The chain is Argininosuccinate lyase from Methanocaldococcus jannaschii (strain ATCC 43067 / DSM 2661 / JAL-1 / JCM 10045 / NBRC 100440) (Methanococcus jannaschii).